We begin with the raw amino-acid sequence, 89 residues long: Prostaglandin E2 receptor EP3 subtype (89 aa).

Residues 1 to 18 traverse the membrane as a helical segment; the sequence is GVWLAVLAFALLPVLGVG. At 19 to 48 the chain is on the extracellular side; the sequence is QYTIQWPGTWCFISTGPGGNGTNSRQNWGN. A glycan (N-linked (GlcNAc...) asparagine) is linked at Asn38. The helical transmembrane segment at 49-74 threads the bilayer; the sequence is VFFASDFAILGLSALVVTFACNLATI. Residues 75 to 89 lie on the Cytoplasmic side of the membrane; it reads KALVSRCRAKATASQ.

It belongs to the G-protein coupled receptor 1 family. As to quaternary structure, interacts (via C-terminus) with MKLN1.

It localises to the cell membrane. Receptor for prostaglandin E2 (PGE2). Required for normal development of fever in response to pyrinogens, including IL1B, prostaglandin E2 and bacterial lipopolysaccharide (LPS). Required for normal potentiation of platelet aggregation by prostaglandin E2, and thus plays a role in the regulation of blood coagulation. Required for increased HCO3(-) secretion in the duodenum in response to mucosal acidification, and thereby contributes to the protection of the mucosa against acid-induced ulceration. Not required for normal kidney function, normal urine volume and osmolality. In Ovis aries (Sheep), this protein is Prostaglandin E2 receptor EP3 subtype (PTGER3).